The primary structure comprises 247 residues: MIIMLSPAKNMKNIEVFDRDLSLPCFIDNTKEIVENIKTFAIEDFKNKMKINEKLAVLNKNRFESIKFDRLGNPAILTYDGIQYKNIEAENFTRKDEEFANSCIRIISGLYGVVKPYDSIYEYRLEMQTKLRVGEFKNLYEYWGNRIYKELIKEKTAIVNLSSNEYSKSIEKFIKDSDTYITCTFKVNKNGILKVESTQAKKARGMMTKYIVKNRIRDIEELKKFNLEGYKYKENLSNNSEYIFVKE.

Belongs to the UPF0246 family.

In Clostridioides difficile (strain 630) (Peptoclostridium difficile), this protein is UPF0246 protein CD630_18230.